The following is a 563-amino-acid chain: Formate--tetrahydrofolate ligase (563 aa).

65-72 lines the ATP pocket; it reads TPLGEGKT.

This sequence belongs to the formate--tetrahydrofolate ligase family.

It carries out the reaction (6S)-5,6,7,8-tetrahydrofolate + formate + ATP = (6R)-10-formyltetrahydrofolate + ADP + phosphate. It functions in the pathway one-carbon metabolism; tetrahydrofolate interconversion. This is Formate--tetrahydrofolate ligase from Cutibacterium acnes (strain DSM 16379 / KPA171202) (Propionibacterium acnes).